The chain runs to 186 residues: UPF0200 protein PH1008 (186 aa).

7–14 is a binding site for ATP; that stretch reads GMPGSGKG.

The protein belongs to the UPF0200 family.

This chain is UPF0200 protein PH1008, found in Pyrococcus horikoshii (strain ATCC 700860 / DSM 12428 / JCM 9974 / NBRC 100139 / OT-3).